The primary structure comprises 726 residues: Catalase-peroxidase (726 aa).

Residues 98-226 (WHSAGTYRMQ…LAAVHMGLIY (129 aa)) constitute a cross-link (tryptophyl-tyrosyl-methioninium (Trp-Tyr) (with M-252)). The active-site Proton acceptor is His99. The segment at residues 226–252 (YVNPEGVNGQPDPARTAQHVRETFARM) is a cross-link (tryptophyl-tyrosyl-methioninium (Tyr-Met) (with W-98)). Residue His267 coordinates heme b.

The protein belongs to the peroxidase family. Peroxidase/catalase subfamily. In terms of assembly, homodimer or homotetramer. Requires heme b as cofactor. Formation of the three residue Trp-Tyr-Met cross-link is important for the catalase, but not the peroxidase activity of the enzyme.

The enzyme catalyses H2O2 + AH2 = A + 2 H2O. It carries out the reaction 2 H2O2 = O2 + 2 H2O. In terms of biological role, bifunctional enzyme with both catalase and broad-spectrum peroxidase activity. In Roseobacter denitrificans (strain ATCC 33942 / OCh 114) (Erythrobacter sp. (strain OCh 114)), this protein is Catalase-peroxidase.